Consider the following 1159-residue polypeptide: ATP-dependent helicase/deoxyribonuclease subunit B (1159 aa).

The UvrD-like helicase ATP-binding domain maps to 1 to 275; it reads MEFNTYIGRA…TYFNTFYRYN (275 aa). Position 8–15 (8–15) interacts with ATP; sequence GRAGTGKS. One can recognise a UvrD-like helicase C-terminal domain in the interval 269–583; sequence NTFYRYNNDD…SIGTMDLAKV (315 aa). Residues cysteine 784, cysteine 1112, cysteine 1115, and cysteine 1121 each contribute to the [4Fe-4S] cluster site.

Belongs to the helicase family. AddB/RexB type 1 subfamily. In terms of assembly, heterodimer of AddA and AddB. Mg(2+) serves as cofactor. Requires [4Fe-4S] cluster as cofactor.

Its function is as follows. The heterodimer acts as both an ATP-dependent DNA helicase and an ATP-dependent, dual-direction single-stranded exonuclease. Recognizes the chi site generating a DNA molecule suitable for the initiation of homologous recombination. The AddB subunit has 5' -&gt; 3' nuclease activity but not helicase activity. The polypeptide is ATP-dependent helicase/deoxyribonuclease subunit B (Staphylococcus epidermidis (strain ATCC 35984 / DSM 28319 / BCRC 17069 / CCUG 31568 / BM 3577 / RP62A)).